Here is a 701-residue protein sequence, read N- to C-terminus: Elongation factor G (701 aa).

The 283-residue stretch at 8–290 (KRYRNIGICA…AVIEFLPAPD (283 aa)) folds into the tr-type G domain. Residues 17-24 (AHVDAGKT), 88-92 (DTPGH), and 142-145 (NKMD) each bind GTP.

The protein belongs to the TRAFAC class translation factor GTPase superfamily. Classic translation factor GTPase family. EF-G/EF-2 subfamily.

Its subcellular location is the cytoplasm. Its function is as follows. Catalyzes the GTP-dependent ribosomal translocation step during translation elongation. During this step, the ribosome changes from the pre-translocational (PRE) to the post-translocational (POST) state as the newly formed A-site-bound peptidyl-tRNA and P-site-bound deacylated tRNA move to the P and E sites, respectively. Catalyzes the coordinated movement of the two tRNA molecules, the mRNA and conformational changes in the ribosome. This chain is Elongation factor G, found in Marinobacter nauticus (strain ATCC 700491 / DSM 11845 / VT8) (Marinobacter aquaeolei).